Consider the following 471-residue polypeptide: Cytidine and dCMP deaminase domain-containing protein 1 (471 aa).

Positions 1-27 (MAESNSWRSHRESDGNRSIPNGDDARN) are disordered. CMP/dCMP-type deaminase domains follow at residues 57 to 153 (LWME…LLSE) and 312 to 460 (GVIR…KLNG). Residues His99, Cys124, Cys127, and His393 each coordinate Zn(2+). Glu395 acts as the Proton donor in catalysis. Residues Cys421 and Cys424 each contribute to the Zn(2+) site.

The protein belongs to the cytidine and deoxycytidylate deaminase family. Requires Zn(2+) as cofactor.

The catalysed reaction is 2'-deoxycytidine + H2O + H(+) = 2'-deoxyuridine + NH4(+). It catalyses the reaction cytidine + H2O + H(+) = uridine + NH4(+). Functionally, catalyzes the deamination of cytidine and deoxycytidine into uridine and deoxyuridine, respectively. The sequence is that of Cytidine and dCMP deaminase domain-containing protein 1 (cdadc1) from Danio rerio (Zebrafish).